A 152-amino-acid polypeptide reads, in one-letter code: Large ribosomal subunit protein bL21 (152 aa).

The disordered stretch occupies residues 115–152 (VTSISNGEKPKKATTSAKPNTKKPSTAVKSSKVEKTPE). Over residues 127–143 (ATTSAKPNTKKPSTAVK) the composition is skewed to polar residues.

The protein belongs to the bacterial ribosomal protein bL21 family. In terms of assembly, part of the 50S ribosomal subunit. Contacts protein L20.

Functionally, this protein binds to 23S rRNA in the presence of protein L20. This chain is Large ribosomal subunit protein bL21, found in Prochlorococcus marinus (strain SARG / CCMP1375 / SS120).